Reading from the N-terminus, the 445-residue chain is Histidinol dehydrogenase (445 aa).

Residues Tyr130, Gln192, and Asn215 each coordinate NAD(+). Residues Ser238, Gln260, and His263 each contribute to the substrate site. 2 residues coordinate Zn(2+): Gln260 and His263. Catalysis depends on proton acceptor residues Glu328 and His329. Substrate contacts are provided by His329, Asp362, Glu416, and His421. Residue Asp362 participates in Zn(2+) binding. His421 provides a ligand contact to Zn(2+).

It belongs to the histidinol dehydrogenase family. Requires Zn(2+) as cofactor.

The enzyme catalyses L-histidinol + 2 NAD(+) + H2O = L-histidine + 2 NADH + 3 H(+). The protein operates within amino-acid biosynthesis; L-histidine biosynthesis; L-histidine from 5-phospho-alpha-D-ribose 1-diphosphate: step 9/9. Functionally, catalyzes the sequential NAD-dependent oxidations of L-histidinol to L-histidinaldehyde and then to L-histidine. The chain is Histidinol dehydrogenase from Gloeobacter violaceus (strain ATCC 29082 / PCC 7421).